The following is a 238-amino-acid chain: Sugar fermentation stimulation protein homolog (238 aa).

This sequence belongs to the SfsA family.

The chain is Sugar fermentation stimulation protein homolog from Vibrio vulnificus (strain CMCP6).